A 208-amino-acid chain; its full sequence is Protein-L-isoaspartate O-methyltransferase (208 aa).

Residue Ser-59 is part of the active site.

Belongs to the methyltransferase superfamily. L-isoaspartyl/D-aspartyl protein methyltransferase family.

The protein localises to the cytoplasm. It carries out the reaction [protein]-L-isoaspartate + S-adenosyl-L-methionine = [protein]-L-isoaspartate alpha-methyl ester + S-adenosyl-L-homocysteine. Functionally, catalyzes the methyl esterification of L-isoaspartyl residues in peptides and proteins that result from spontaneous decomposition of normal L-aspartyl and L-asparaginyl residues. It plays a role in the repair and/or degradation of damaged proteins. This is Protein-L-isoaspartate O-methyltransferase from Shigella sonnei (strain Ss046).